Consider the following 93-residue polypeptide: Pyrimidine/purine nucleoside phosphorylase (93 aa).

This sequence belongs to the nucleoside phosphorylase PpnP family.

It carries out the reaction a purine D-ribonucleoside + phosphate = a purine nucleobase + alpha-D-ribose 1-phosphate. It catalyses the reaction adenosine + phosphate = alpha-D-ribose 1-phosphate + adenine. The enzyme catalyses cytidine + phosphate = cytosine + alpha-D-ribose 1-phosphate. The catalysed reaction is guanosine + phosphate = alpha-D-ribose 1-phosphate + guanine. It carries out the reaction inosine + phosphate = alpha-D-ribose 1-phosphate + hypoxanthine. It catalyses the reaction thymidine + phosphate = 2-deoxy-alpha-D-ribose 1-phosphate + thymine. The enzyme catalyses uridine + phosphate = alpha-D-ribose 1-phosphate + uracil. The catalysed reaction is xanthosine + phosphate = alpha-D-ribose 1-phosphate + xanthine. Functionally, catalyzes the phosphorolysis of diverse nucleosides, yielding D-ribose 1-phosphate and the respective free bases. Can use uridine, adenosine, guanosine, cytidine, thymidine, inosine and xanthosine as substrates. Also catalyzes the reverse reactions. This chain is Pyrimidine/purine nucleoside phosphorylase, found in Pseudomonas syringae pv. tomato (strain ATCC BAA-871 / DC3000).